The following is a 166-amino-acid chain: Phosphopantetheine adenylyltransferase (166 aa).

S11 lines the substrate pocket. ATP contacts are provided by residues 11 to 12 and H19; that span reads SF. Substrate-binding residues include K43, V80, and R94. Residues 95–97, E105, and 130–136 contribute to the ATP site; these read GLR and VRTVTAT.

This sequence belongs to the bacterial CoaD family. Homohexamer. Requires Mg(2+) as cofactor.

Its subcellular location is the cytoplasm. The catalysed reaction is (R)-4'-phosphopantetheine + ATP + H(+) = 3'-dephospho-CoA + diphosphate. It participates in cofactor biosynthesis; coenzyme A biosynthesis; CoA from (R)-pantothenate: step 4/5. Its function is as follows. Reversibly transfers an adenylyl group from ATP to 4'-phosphopantetheine, yielding dephospho-CoA (dPCoA) and pyrophosphate. The sequence is that of Phosphopantetheine adenylyltransferase from Chelativorans sp. (strain BNC1).